The chain runs to 145 residues: Transcription antitermination protein NusB (145 aa).

It belongs to the NusB family.

Its function is as follows. Involved in transcription antitermination. Required for transcription of ribosomal RNA (rRNA) genes. Binds specifically to the boxA antiterminator sequence of the ribosomal RNA (rrn) operons. The sequence is that of Transcription antitermination protein NusB from Burkholderia cenocepacia (strain HI2424).